Here is a 241-residue protein sequence, read N- to C-terminus: Ubiquinone biosynthesis O-methyltransferase (241 aa).

Residues Arg46, Gly66, Asp87, and Met131 each coordinate S-adenosyl-L-methionine.

It belongs to the methyltransferase superfamily. UbiG/COQ3 family.

It carries out the reaction a 3-demethylubiquinol + S-adenosyl-L-methionine = a ubiquinol + S-adenosyl-L-homocysteine + H(+). The enzyme catalyses a 3-(all-trans-polyprenyl)benzene-1,2-diol + S-adenosyl-L-methionine = a 2-methoxy-6-(all-trans-polyprenyl)phenol + S-adenosyl-L-homocysteine + H(+). It participates in cofactor biosynthesis; ubiquinone biosynthesis. In terms of biological role, O-methyltransferase that catalyzes the 2 O-methylation steps in the ubiquinone biosynthetic pathway. The polypeptide is Ubiquinone biosynthesis O-methyltransferase (Bordetella pertussis (strain Tohama I / ATCC BAA-589 / NCTC 13251)).